The sequence spans 129 residues: Iron-sulfur cluster assembly 1 homolog, mitochondrial (129 aa).

A mitochondrion-targeting transit peptide spans 1–12 (MSASIARATVRA). 3 residues coordinate Fe cation: C57, C121, and C123.

The protein belongs to the HesB/IscA family.

Its subcellular location is the mitochondrion. Its function is as follows. Involved in the maturation of mitochondrial 4Fe-4S proteins functioning late in the iron-sulfur cluster assembly pathway. Probably involved in the binding of an intermediate of Fe/S cluster assembly. The protein is Iron-sulfur cluster assembly 1 homolog, mitochondrial (isca1) of Danio rerio (Zebrafish).